A 229-amino-acid polypeptide reads, in one-letter code: (S)-2-haloacid dehalogenase 2 (229 aa).

D10 serves as the catalytic Nucleophile. An (S)-2-haloacid-binding positions include L11–Y12, R41, and S118–N119. The segment at S175–D180 is important for catalytic activity.

Belongs to the HAD-like hydrolase superfamily. S-2-haloalkanoic acid dehalogenase family.

It carries out the reaction an (S)-2-haloacid + H2O = a (2R)-2-hydroxycarboxylate + a halide anion + H(+). It catalyses the reaction (S)-2-chloropropanoate + H2O = (R)-lactate + chloride + H(+). Functionally, catalyzes the hydrolytic dehalogenation of small (S)-2-haloalkanoic acids to yield the corresponding (R)-2-hydroxyalkanoic acids. Acts on acids of short chain lengths, C(2) to C(4), with inversion of configuration at C-2. Active with 2-halogenated carboxylic acids and converts only the S-isomer (or L-isomer) of 2-chloropropionic acid with inversion of configuration to produce R-lactate (or D-isomer). The polypeptide is (S)-2-haloacid dehalogenase 2 (Pseudomonas sp. (strain CBS-3)).